The sequence spans 301 residues: General transcription and DNA repair factor IIH subunit TFB4 (301 aa).

The C4-type zinc-finger motif lies at 259 to 276 (CSVCLSIFCEHHKKCSTC).

It belongs to the TFB4 family. In terms of assembly, component of the 7-subunit TFIIH core complex composed of XPB, XPD, TFB1/GTF2H1, GTF2H2/P44, TFB4/GTF2H3, TFB2/GTF2H4 and TFB5/GTF2H5, which is active in NER. The core complex associates with the 3-subunit CDK-activating kinase (CAK) module composed of CYCH1/cyclin H1, CDKD and MAT1/At4g30820 to form the 10-subunit holoenzyme (holo-TFIIH) active in transcription.

Its subcellular location is the nucleus. Its function is as follows. Component of the general transcription and DNA repair factor IIH (TFIIH) core complex, which is involved in general and transcription-coupled nucleotide excision repair (NER) of damaged DNA and, when complexed to CAK, in RNA transcription by RNA polymerase II. In NER, TFIIH acts by opening DNA around the lesion to allow the excision of the damaged oligonucleotide and its replacement by a new DNA fragment. In transcription, TFIIH has an essential role in transcription initiation. When the pre-initiation complex (PIC) has been established, TFIIH is required for promoter opening and promoter escape. Phosphorylation of the C-terminal tail (CTD) of the largest subunit of RNA polymerase II by the kinase module CAK controls the initiation of transcription. This is General transcription and DNA repair factor IIH subunit TFB4 from Arabidopsis thaliana (Mouse-ear cress).